A 65-amino-acid polypeptide reads, in one-letter code: MEARVLLLCAVLFLLVHTPPAAGGLNNKCAYFRGQCRRKCPQRDIFFGFCRNHDQCCLSSLHTRH.

Residues 1–23 form the signal peptide; that stretch reads MEARVLLLCAVLFLLVHTPPAAG. Intrachain disulfides connect C29–C56, C36–C50, and C40–C57.

It belongs to the beta-defensin family. In terms of tissue distribution, lowly expressed in spleen, and lung.

The protein localises to the secreted. Functionally, has antimicrobial activity. The polypeptide is Defensin-B2 (Ornithorhynchus anatinus (Duckbill platypus)).